Here is a 167-residue protein sequence, read N- to C-terminus: Peptidyl-prolyl cis-trans isomerase-like 3 (167 aa).

The 160-residue stretch at 1-160 folds into the PPIase cyclophilin-type domain; that stretch reads MSVTLHTSHG…EPVRIENVTI (160 aa).

It belongs to the cyclophilin-type PPIase family. PPIL3 subfamily.

The enzyme catalyses [protein]-peptidylproline (omega=180) = [protein]-peptidylproline (omega=0). In terms of biological role, PPIases accelerate the folding of proteins. It catalyzes the cis-trans isomerization of proline imidic peptide bonds in oligopeptides. The chain is Peptidyl-prolyl cis-trans isomerase-like 3 (CYP10) from Gibberella zeae (strain ATCC MYA-4620 / CBS 123657 / FGSC 9075 / NRRL 31084 / PH-1) (Wheat head blight fungus).